A 159-amino-acid polypeptide reads, in one-letter code: Phosphopantetheine adenylyltransferase (159 aa).

Substrate is bound at residue Ser9. Residues 9–10 (SF) and His17 each bind ATP. Lys41, Leu73, and Lys87 together coordinate substrate. ATP contacts are provided by residues 88 to 90 (GLR), Glu98, and 123 to 129 (YSYLSSS).

Belongs to the bacterial CoaD family. As to quaternary structure, homohexamer. Requires Mg(2+) as cofactor.

It localises to the cytoplasm. The catalysed reaction is (R)-4'-phosphopantetheine + ATP + H(+) = 3'-dephospho-CoA + diphosphate. The protein operates within cofactor biosynthesis; coenzyme A biosynthesis; CoA from (R)-pantothenate: step 4/5. Functionally, reversibly transfers an adenylyl group from ATP to 4'-phosphopantetheine, yielding dephospho-CoA (dPCoA) and pyrophosphate. The chain is Phosphopantetheine adenylyltransferase from Clostridium botulinum (strain Alaska E43 / Type E3).